A 356-amino-acid polypeptide reads, in one-letter code: Transcription factor ATOH1 (356 aa).

Basic and acidic residues predominate over residues 1–21 (MSRLLHAEEWAEVKELGDHHR). 2 disordered regions span residues 1–56 (MSRL…PELS) and 92–125 (SEAA…GPVK). Residues 26–40 (HHLPQPPPPPPPQPP) are compositionally biased toward pro residues. Residues 96 to 109 (APRDEVDGRGELVR) show a composition bias toward basic and acidic residues. Over residues 110–124 (RSSGGASSSKSPGPV) the composition is skewed to low complexity. The bHLH domain occupies 161 to 213 (QRRLAANARERRRMHGLNHAFDQLRNVIPSFNNDKKLSKYETLQMAQIYINAL). Disordered regions lie at residues 218 to 279 (QTPS…TRFS) and 314 to 356 (SPSL…DEAS). The segment covering 252 to 266 (NATAAGAQQASGGSQ) has biased composition (low complexity). Over residues 337–356 (HRSDGEFSPHSHYSDSDEAS) the composition is skewed to basic and acidic residues.

Efficient DNA binding requires dimerization with another bHLH protein.

The protein resides in the nucleus. In terms of biological role, transcriptional regulator. Activates E box-dependent transcription in collaboration with TCF3/E47, but the activity is completely antagonized by the negative regulator of neurogenesis HES1. Plays a role in the differentiation of subsets of neural cells by activating E box-dependent transcription. In Pan troglodytes (Chimpanzee), this protein is Transcription factor ATOH1.